Here is a 494-residue protein sequence, read N- to C-terminus: Alpha-amylase A (494 aa).

A signal peptide spans 1-18 (MFLAKSLVCLALLAVANA). Residue Q19 is modified to Pyrrolidone carboxylic acid. C46 and C102 are disulfide-bonded. Ca(2+) is bound by residues N116, R165, and D174. C153 and C167 form a disulfide bridge. Residue R202 participates in chloride binding. D204 functions as the Nucleophile in the catalytic mechanism. H208 lines the Ca(2+) pocket. The active-site Proton donor is the E241. 2 residues coordinate chloride: N304 and R343. 2 disulfide bridges follow: C376/C382 and C448/C460.

Belongs to the glycosyl hydrolase 13 family. In terms of assembly, monomer. Ca(2+) is required as a cofactor. Chloride serves as cofactor.

The catalysed reaction is Endohydrolysis of (1-&gt;4)-alpha-D-glucosidic linkages in polysaccharides containing three or more (1-&gt;4)-alpha-linked D-glucose units.. The protein is Alpha-amylase A (Amy-d) of Drosophila mauritiana (Fruit fly).